Reading from the N-terminus, the 562-residue chain is Potassium-transporting ATPase potassium-binding subunit (562 aa).

Transmembrane regions (helical) follow at residues 5-25 (AFLLIFGLLLTVLIVAQPLGS), 63-83 (AAAILTLNLIGIVVLFVLLMA), 132-152 (GLTVQNFLAAASGIAVAFALI), 175-195 (LYVLLPLSLLLALFFVSQGVL), 250-270 (LSNIVQMLAILLIPTALCFAF), 279-299 (QGHALLWAMGLIFIVAAAVVM), 327-347 (FGVLTSSLYAVVTTATSTGAV), 356-376 (ALGGMVPMWLMQIGEVVFGGV), 379-399 (GLYGMLLFVLLTVFIAGLMIG), 416-436 (MTALAILIPPALVLLGTALAL), 483-503 (VLLAVAMLLGRFAVMVPVLAI), and 526-546 (LFIGMLIAIVLLIGALTFIPA).

This sequence belongs to the KdpA family. In terms of assembly, the system is composed of three essential subunits: KdpA, KdpB and KdpC.

Its subcellular location is the cell inner membrane. Its function is as follows. Part of the high-affinity ATP-driven potassium transport (or Kdp) system, which catalyzes the hydrolysis of ATP coupled with the electrogenic transport of potassium into the cytoplasm. This subunit binds the periplasmic potassium ions and delivers the ions to the membrane domain of KdpB through an intramembrane tunnel. This chain is Potassium-transporting ATPase potassium-binding subunit, found in Pectobacterium carotovorum subsp. carotovorum (strain PC1).